We begin with the raw amino-acid sequence, 319 residues long: Acetyl-coenzyme A carboxylase carboxyl transferase subunit alpha (319 aa).

The CoA carboxyltransferase C-terminal domain maps to 38–293; the sequence is HALQDKLRMR…KAVLLNELDA (256 aa).

The protein belongs to the AccA family. As to quaternary structure, acetyl-CoA carboxylase is a heterohexamer composed of biotin carboxyl carrier protein (AccB), biotin carboxylase (AccC) and two subunits each of ACCase subunit alpha (AccA) and ACCase subunit beta (AccD).

The protein localises to the cytoplasm. The catalysed reaction is N(6)-carboxybiotinyl-L-lysyl-[protein] + acetyl-CoA = N(6)-biotinyl-L-lysyl-[protein] + malonyl-CoA. The protein operates within lipid metabolism; malonyl-CoA biosynthesis; malonyl-CoA from acetyl-CoA: step 1/1. In terms of biological role, component of the acetyl coenzyme A carboxylase (ACC) complex. First, biotin carboxylase catalyzes the carboxylation of biotin on its carrier protein (BCCP) and then the CO(2) group is transferred by the carboxyltransferase to acetyl-CoA to form malonyl-CoA. In Stenotrophomonas maltophilia (strain K279a), this protein is Acetyl-coenzyme A carboxylase carboxyl transferase subunit alpha.